The primary structure comprises 363 residues: MAP kinase kinase skh1/pek1 (363 aa).

Residues 79 to 343 (ILYMNSLGEG…PQKMLTHPWV (265 aa)) form the Protein kinase domain. ATP is bound by residues 85 to 93 (LGEGVSGSV) and Lys-108. The Proton acceptor role is filled by Asp-206. A Phosphoserine modification is found at Ser-234. A Phosphothreonine modification is found at Thr-238.

This sequence belongs to the protein kinase superfamily. STE Ser/Thr protein kinase family. MAP kinase kinase subfamily.

It catalyses the reaction L-seryl-[protein] + ATP = O-phospho-L-seryl-[protein] + ADP + H(+). It carries out the reaction L-threonyl-[protein] + ATP = O-phospho-L-threonyl-[protein] + ADP + H(+). The enzyme catalyses L-tyrosyl-[protein] + ATP = O-phospho-L-tyrosyl-[protein] + ADP + H(+). Activated by mkh1. In terms of biological role, involved in the mkh1 signal transduction pathway that plays a role in cell wall integrity. Activates spm1/pmk1 via phosphorylation. This is MAP kinase kinase skh1/pek1 (skh1) from Schizosaccharomyces pombe (strain 972 / ATCC 24843) (Fission yeast).